Reading from the N-terminus, the 147-residue chain is uncharacterized protein (147 aa).

2 helical membrane-spanning segments follow: residues 4-26 (YLRV…FFWG) and 123-145 (YALC…RAYF).

It is found in the cell membrane. This is an uncharacterized protein from Treponema pallidum (strain Nichols).